Here is a 155-residue protein sequence, read N- to C-terminus: Large ribosomal subunit protein bL17 (155 aa).

It belongs to the bacterial ribosomal protein bL17 family. In terms of assembly, part of the 50S ribosomal subunit. Contacts protein L32.

This is Large ribosomal subunit protein bL17 from Syntrophotalea carbinolica (strain DSM 2380 / NBRC 103641 / GraBd1) (Pelobacter carbinolicus).